The chain runs to 319 residues: Lipoyl synthase (319 aa).

The segment covering 1–12 (MVTIVDTLSNTP) has biased composition (polar residues). Residues 1–32 (MVTIVDTLSNTPLRPRHPEKANRPDSISPAKP) are disordered. The [4Fe-4S] cluster site is built by C61, C66, C72, C87, C91, C94, and S300. The 217-residue stretch at 73–289 (WDKKHATFMI…ETVAYTKGFL (217 aa)) folds into the Radical SAM core domain.

Belongs to the radical SAM superfamily. Lipoyl synthase family. [4Fe-4S] cluster serves as cofactor.

Its subcellular location is the cytoplasm. The enzyme catalyses [[Fe-S] cluster scaffold protein carrying a second [4Fe-4S](2+) cluster] + N(6)-octanoyl-L-lysyl-[protein] + 2 oxidized [2Fe-2S]-[ferredoxin] + 2 S-adenosyl-L-methionine + 4 H(+) = [[Fe-S] cluster scaffold protein] + N(6)-[(R)-dihydrolipoyl]-L-lysyl-[protein] + 4 Fe(3+) + 2 hydrogen sulfide + 2 5'-deoxyadenosine + 2 L-methionine + 2 reduced [2Fe-2S]-[ferredoxin]. It participates in protein modification; protein lipoylation via endogenous pathway; protein N(6)-(lipoyl)lysine from octanoyl-[acyl-carrier-protein]: step 2/2. Catalyzes the radical-mediated insertion of two sulfur atoms into the C-6 and C-8 positions of the octanoyl moiety bound to the lipoyl domains of lipoate-dependent enzymes, thereby converting the octanoylated domains into lipoylated derivatives. In Bradyrhizobium sp. (strain BTAi1 / ATCC BAA-1182), this protein is Lipoyl synthase.